The chain runs to 122 residues: Large ribosomal subunit protein uL14 (122 aa).

It belongs to the universal ribosomal protein uL14 family. In terms of assembly, part of the 50S ribosomal subunit. Forms a cluster with proteins L3 and L19. In the 70S ribosome, L14 and L19 interact and together make contacts with the 16S rRNA in bridges B5 and B8.

Functionally, binds to 23S rRNA. Forms part of two intersubunit bridges in the 70S ribosome. The sequence is that of Large ribosomal subunit protein uL14 from Chlamydia caviae (strain ATCC VR-813 / DSM 19441 / 03DC25 / GPIC) (Chlamydophila caviae).